We begin with the raw amino-acid sequence, 533 residues long: Glycogen synthase (533 aa).

K12 is an ADP-alpha-D-glucose binding site. The segment at 497 to 533 (AALARADAASGRRRRAPEQSERLRQERLARQVALASK) is disordered. Residues 512 to 525 (APEQSERLRQERLA) show a composition bias toward basic and acidic residues.

It belongs to the glycosyltransferase 1 family. Bacterial/plant glycogen synthase subfamily.

The catalysed reaction is [(1-&gt;4)-alpha-D-glucosyl](n) + ADP-alpha-D-glucose = [(1-&gt;4)-alpha-D-glucosyl](n+1) + ADP + H(+). It participates in glycan biosynthesis; glycogen biosynthesis. Its function is as follows. Synthesizes alpha-1,4-glucan chains using ADP-glucose. This Burkholderia thailandensis (strain ATCC 700388 / DSM 13276 / CCUG 48851 / CIP 106301 / E264) protein is Glycogen synthase.